Consider the following 522-residue polypeptide: Subtilisin-like protease 10 (522 aa).

Positions 1-19 are cleaved as a signal peptide; sequence MFFFKGVVAVLSFFSAVNA. Positions 20–117 are excised as a propeptide; that stretch reads APFMKPNNGT…VERDQIGTSQ (98 aa). The Inhibitor I9 domain occupies 36–113; that stretch reads SYIVLLKRDI…HVAHVERDQI (78 aa). The 279-residue stretch at 127-405 folds into the Peptidase S8 domain; the sequence is NWGLGRLSNN…KLLVNGANGT (279 aa). Active-site charge relay system residues include Asp-159 and His-190. N-linked (GlcNAc...) asparagine glycosylation is present at Asn-251. Ser-348 (charge relay system) is an active-site residue. Polar residues predominate over residues 384–397; it reads ASVKNPGPNTTNKL. Residues 384-515 are disordered; it reads ASVKNPGPNT…GWNRPMWWNR (132 aa). Residues Asn-392 and Asn-403 are each glycosylated (N-linked (GlcNAc...) asparagine). Over residues 432–459 the composition is skewed to pro residues; it reads SQNPPPGQNPPPGQNPPPEQPAPSPPAN.

This sequence belongs to the peptidase S8 family.

The protein resides in the secreted. Functionally, secreted subtilisin-like serine protease with keratinolytic activity that contributes to pathogenicity. This Arthroderma benhamiae (strain ATCC MYA-4681 / CBS 112371) (Trichophyton mentagrophytes) protein is Subtilisin-like protease 10 (SUB10).